A 297-amino-acid polypeptide reads, in one-letter code: Alpha-tubulin N-acetyltransferase 1 (297 aa).

One can recognise an N-acetyltransferase domain in the interval 1 to 186 (MEFDFDVHKI…NNFVVFDGFF (186 aa)). Acetyl-CoA-binding positions include 120-133 (FYIHETLQRHGFGK) and 156-165 (SEKFLSFLRK). A disordered region spans residues 269 to 297 (LHRTANSEQEDHSQRRRTSSLNRPQSIHH). The segment covering 287-297 (SSLNRPQSIHH) has biased composition (polar residues).

Belongs to the acetyltransferase ATAT1 family.

Its subcellular location is the cytoplasm. The protein localises to the membrane. It localises to the clathrin-coated pit. It is found in the cell junction. The protein resides in the focal adhesion. Its subcellular location is the cell projection. The protein localises to the axon. It localises to the cytoskeleton. It is found in the spindle. It catalyses the reaction L-lysyl-[alpha-tubulin] + acetyl-CoA = N(6)-acetyl-L-lysyl-[alpha-tubulin] + CoA + H(+). Specifically acetylates 'Lys-40' in alpha-tubulin on the lumenal side of microtubules. Promotes microtubule destabilization and accelerates microtubule dynamics; this activity may be independent of acetylation activity. Acetylates alpha-tubulin with a slow enzymatic rate, due to a catalytic site that is not optimized for acetyl transfer. Enters the microtubule through each end and diffuses quickly throughout the lumen of microtubules. Acetylates only long/old microtubules because of its slow acetylation rate since it does not have time to act on dynamically unstable microtubules before the enzyme is released. May be involved in neuron development. This Xenopus tropicalis (Western clawed frog) protein is Alpha-tubulin N-acetyltransferase 1.